The chain runs to 139 residues: Actin-depolymerizing factor 4 (139 aa).

An ADF-H domain is found at 5–139; the sequence is SSGVAIHDDC…SLDALKDRVK (135 aa).

This sequence belongs to the actin-binding proteins ADF family. Interacts with LECRK1 (via kinase domain).

It is found in the cytoplasm. The protein localises to the cytoskeleton. Actin-depolymerizing protein. Severs actin filaments (F-actin) and binds to actin monomers. Involved in innate immunity. Required for the expression of defense-related genes PR1A, LOX2 and CHS1 upon biotic stresses. Required for basal resistance to the fungal blast (Magnaporthe grisea), bacterial blight (Xanthomonas oryzae pv. oryzae, Xoo) and the herbivorous insect brown planthopper (Nilaparvata lugens, BPH). Involved in the promotion of seed germination. Required for the expression of alpha-amylase genes during seed germination. The protein is Actin-depolymerizing factor 4 (ADF4) of Oryza sativa subsp. japonica (Rice).